A 437-amino-acid chain; its full sequence is ATP-dependent protease ATPase subunit HslU (437 aa).

Residues valine 18, 60–65 (GCGKTE), aspartate 250, glutamate 315, and arginine 387 each bind ATP.

This sequence belongs to the ClpX chaperone family. HslU subfamily. In terms of assembly, a double ring-shaped homohexamer of HslV is capped on each side by a ring-shaped HslU homohexamer. The assembly of the HslU/HslV complex is dependent on binding of ATP.

It localises to the cytoplasm. In terms of biological role, ATPase subunit of a proteasome-like degradation complex; this subunit has chaperone activity. The binding of ATP and its subsequent hydrolysis by HslU are essential for unfolding of protein substrates subsequently hydrolyzed by HslV. HslU recognizes the N-terminal part of its protein substrates and unfolds these before they are guided to HslV for hydrolysis. This is ATP-dependent protease ATPase subunit HslU from Methylobacterium sp. (strain 4-46).